Reading from the N-terminus, the 62-residue chain is Photosystem II reaction center protein Z (62 aa).

The next 2 helical transmembrane spans lie at 8-28 (ALIGLVLLSFVLVVGVPVAYA) and 41-61 (WVGSAVWIALVFLVGLLNFFV).

The protein belongs to the PsbZ family. In terms of assembly, PSII is composed of 1 copy each of membrane proteins PsbA, PsbB, PsbC, PsbD, PsbE, PsbF, PsbH, PsbI, PsbJ, PsbK, PsbL, PsbM, PsbT, PsbX, PsbY, PsbZ, Psb30/Ycf12, peripheral proteins PsbO, CyanoQ (PsbQ), PsbU, PsbV and a large number of cofactors. It forms dimeric complexes.

It is found in the cellular thylakoid membrane. In terms of biological role, may control the interaction of photosystem II (PSII) cores with the light-harvesting antenna, regulates electron flow through the 2 photosystem reaction centers. PSII is a light-driven water plastoquinone oxidoreductase, using light energy to abstract electrons from H(2)O, generating a proton gradient subsequently used for ATP formation. This Nostoc punctiforme (strain ATCC 29133 / PCC 73102) protein is Photosystem II reaction center protein Z.